The following is a 412-amino-acid chain: Putative disintegrin and metalloproteinase domain-containing protein 5 (412 aa).

Positions 111–199 (EKYADTNILL…YCLPDTYVRD (89 aa)) constitute a Disintegrin domain. The 35-residue stretch at 351-385 (NLKLCDASNHCDRHGVCNNFNHCHCEKGYNPPYCQ) folds into the EGF-like domain.

In terms of assembly, interacts with TEX101. In terms of tissue distribution, highly expressed in testis.

Functionally, this is a non catalytic metalloprotease-like protein. The protein is Putative disintegrin and metalloproteinase domain-containing protein 5 (ADAM5) of Homo sapiens (Human).